Reading from the N-terminus, the 546-residue chain is Thermosome subunit beta (546 aa).

It belongs to the TCP-1 chaperonin family. As to quaternary structure, forms a Heterooligomeric complex of two stacked eight-membered rings.

Its function is as follows. Molecular chaperone; binds unfolded polypeptides in vitro, and has a weak ATPase activity. This is Thermosome subunit beta (thsB) from Thermococcus kodakarensis (strain ATCC BAA-918 / JCM 12380 / KOD1) (Pyrococcus kodakaraensis (strain KOD1)).